The primary structure comprises 84 residues: MERNYRKTRVGSVVSDKMDKTVVVAVEDRVRHPLLNKIIRHTRKFKAHDEKNECRIGDKVRIMETRPLSKEKRWRVVEIMERAR.

The protein belongs to the universal ribosomal protein uS17 family. Part of the 30S ribosomal subunit.

In terms of biological role, one of the primary rRNA binding proteins, it binds specifically to the 5'-end of 16S ribosomal RNA. This is Small ribosomal subunit protein uS17 from Moorella thermoacetica (strain ATCC 39073 / JCM 9320).